Here is a 195-residue protein sequence, read N- to C-terminus: Dephospho-CoA kinase (195 aa).

Residues 3–195 form the DPCK domain; it reads IVGLTGGIGS…IALHENYLNH (193 aa). 11–16 contacts ATP; that stretch reads GSGKSA.

It belongs to the CoaE family.

It is found in the cytoplasm. It carries out the reaction 3'-dephospho-CoA + ATP = ADP + CoA + H(+). The protein operates within cofactor biosynthesis; coenzyme A biosynthesis; CoA from (R)-pantothenate: step 5/5. Its function is as follows. Catalyzes the phosphorylation of the 3'-hydroxyl group of dephosphocoenzyme A to form coenzyme A. The chain is Dephospho-CoA kinase from Acinetobacter baylyi (strain ATCC 33305 / BD413 / ADP1).